A 580-amino-acid polypeptide reads, in one-letter code: Serine/threonine-protein kinase PINK1, mitochondrial (580 aa).

Residues 1-77 (MAVRQALGRG…RFFRQSVAGL (77 aa)) constitute a mitochondrion transit peptide. The tract at residues 28–60 (VSGWGKPGPGAAWGRGERPGRVSSPGAQPRPLG) is disordered. The chain crosses the membrane as a helical span at residues 94–110 (GPCGRAVFLAFGLGLGL). Residues 111-117 (IEEKQAE) form a required for outer membrane localization region. A Protein kinase domain is found at 156–510 (YLIGQAIGKG…IAANVLHLSL (355 aa)). ATP-binding positions include 162-170 (IGKGCNAAV) and Lys218. Ser227 bears the Phosphoserine; by autocatalysis mark. Asp361 serves as the catalytic Proton acceptor. Residue Ser401 is modified to Phosphoserine; by autocatalysis.

Belongs to the protein kinase superfamily. Ser/Thr protein kinase family. In terms of assembly, upon mitochondrial depolarization, it forms a supercomplex with TOM and TIM23 complexes. PINK1-TOM-TIM23 supercomplex formation requires PINK1 interaction with TOMM20 and TOMM70 and is critical for PINK1 stabilization at the outer mitochondrial membrane, kinase activation and downstream mitophagy. Upon mitochondrial depolarization, interacts with TIMM23; the interaction is required for PINK1 accumulation at the outer mitochondrial membrane, kinase activation by autophosphorylation and PRKN recruitement to mitochondria. Interacts with PRKN. Interacts with FBXO7. Forms a complex with PRKN and PARK7. Interacts with NENF. The cofactor is Mg(2+). In terms of processing, proteolytically cleaved. In healthy cells, the precursor is continuously imported into the inner mitochondrial membrane (IMM), where it is proteolytically cleaved by mitochondrial-processing peptidase (MPP) and then undergoes further proteolytic cleavage by PARL or AFG3L2 to give rise to the 52 kDa short form. The 52 kDa short form is then released into the cytosol where it rapidly undergoes proteasome-dependent degradation. In unhealthy cells, when cellular stress conditions lead to the loss of mitochondrial membrane potential, mitochondrial import is impaired leading to the precursor accumulating on the outer mitochondrial membrane (OMM). If accumulation at the OMM fails and it is imported into the depolarized mitochondria, it undergoes cleavage by the IMM protease OMA1, promoting its subsequent degradation by the proteasome. Autophosphorylated. Loss of mitochondrial membrane potential results in the precursor accumulating on the outer mitochondrial membrane (OMM) where it is activated by autophosphorylation. Autophosphorylation at Ser-227 and Ser-401 is sufficient and essential for selective recruitment of PRKN to depolarized mitochondria, via PINK1-dependent phosphorylation of ubiquitin and maybe PRKN.

The protein resides in the mitochondrion outer membrane. Its subcellular location is the mitochondrion inner membrane. It is found in the cytoplasm. It localises to the cytosol. The enzyme catalyses L-seryl-[protein] + ATP = O-phospho-L-seryl-[protein] + ADP + H(+). It carries out the reaction L-threonyl-[protein] + ATP = O-phospho-L-threonyl-[protein] + ADP + H(+). In terms of biological role, serine/threonine-protein kinase which acts as a sensor of mitochondrial damage and protects against mitochondrial dysfunction during cellular stress. It phosphorylates mitochondrial proteins to coordinate mitochondrial quality control mechanisms that remove and replace dysfunctional mitochondrial components. Depending on the severity of mitochondrial damage, activity ranges from preventing apoptosis and stimulating mitochondrial biogenesis to eliminating severely damaged mitochondria via PINK1-PRKN-dependent mitophagy. When cellular stress results in irreversible mitochondrial damage, PINK1 accumulates at the outer mitochondrial membrane (OMM) where it phosphorylates pre-existing polyubiquitin chains at 'Ser-65', recruits PRKN from the cytosol to the OMM and activates PRKN by phosphorylation at 'Ser-65'; activated PRKN then ubiquinates VDAC1 and other OMM proteins to initiate mitophagy. The PINK1-PRKN pathway also promotes fission of damaged mitochondria through phosphorylation and PRKN-dependent degradation of mitochondrial proteins involved in fission such as MFN2. This prevents the refusion of unhealthy mitochondria with the mitochondrial network or initiates mitochondrial fragmentation facilitating their later engulfment by autophagosomes. Also promotes mitochondrial fission independently of PRKN and ATG7-mediated mitophagy, via the phosphorylation and activation of DNM1L. Regulates motility of damaged mitochondria by promoting the ubiquitination and subsequent degradation of MIRO1 and MIRO2; in motor neurons, this likely inhibits mitochondrial intracellular anterograde transport along the axons which probably increases the chance of the mitochondria undergoing mitophagy in the soma. Required for ubiquinone reduction by mitochondrial complex I by mediating phosphorylation of complex I subunit NDUFA10. Phosphorylates LETM1, positively regulating its mitochondrial calcium transport activity. The sequence is that of Serine/threonine-protein kinase PINK1, mitochondrial from Rattus norvegicus (Rat).